Consider the following 88-residue polypeptide: Apolipoprotein C-I (88 aa).

Positions 1 to 26 (MRLFLSLPVLVVVLAMVLEGPAPTQA) are cleaved as a signal peptide.

Belongs to the apolipoprotein C1 family.

The protein resides in the secreted. Its function is as follows. Inhibitor of lipoprotein binding to the low density lipoprotein (LDL) receptor, LDL receptor-related protein, and very low density lipoprotein (VLDL) receptor. Associates with high density lipoproteins (HDL) and the triacylglycerol-rich lipoproteins in the plasma and makes up about 10% of the protein of the VLDL and 2% of that of HDL. Appears to interfere directly with fatty acid uptake and is also the major plasma inhibitor of cholesteryl ester transfer protein (CETP). Binds free fatty acids and reduces their intracellular esterification. Modulates the interaction of APOE with beta-migrating VLDL and inhibits binding of beta-VLDL to the LDL receptor-related protein. This chain is Apolipoprotein C-I (APOC1), found in Mirounga angustirostris (Northern elephant seal).